We begin with the raw amino-acid sequence, 110 residues long: Acylphosphatase (110 aa).

Positions 24–110 constitute an Acylphosphatase-like domain; that stretch reads RVRVYVSGRV…SGGARGFEVR (87 aa). Residues arginine 39 and asparagine 57 contribute to the active site.

The protein belongs to the acylphosphatase family.

It catalyses the reaction an acyl phosphate + H2O = a carboxylate + phosphate + H(+). In Rubrobacter xylanophilus (strain DSM 9941 / JCM 11954 / NBRC 16129 / PRD-1), this protein is Acylphosphatase (acyP).